A 116-amino-acid chain; its full sequence is Phosphoribosyl-ATP pyrophosphatase (116 aa).

It belongs to the PRA-PH family.

The protein localises to the cytoplasm. The catalysed reaction is 1-(5-phospho-beta-D-ribosyl)-ATP + H2O = 1-(5-phospho-beta-D-ribosyl)-5'-AMP + diphosphate + H(+). It functions in the pathway amino-acid biosynthesis; L-histidine biosynthesis; L-histidine from 5-phospho-alpha-D-ribose 1-diphosphate: step 2/9. The polypeptide is Phosphoribosyl-ATP pyrophosphatase (Bordetella avium (strain 197N)).